Here is a 310-residue protein sequence, read N- to C-terminus: Cytosolic Fe-S cluster assembly factor Nubp1 homolog (310 aa).

Positions 8, 22, 25, and 31 each coordinate [4Fe-4S] cluster. Residue 62–69 (GKGGVGKS) coordinates ATP. Residues Cys239 and Cys242 each contribute to the [4Fe-4S] cluster site.

It belongs to the Mrp/NBP35 ATP-binding proteins family. NUBP1/NBP35 subfamily. Heterotetramer of 2 Nubp1 and 2 Nubp2 chains. [4Fe-4S] cluster is required as a cofactor.

Its subcellular location is the cytoplasm. Its function is as follows. Component of the cytosolic iron-sulfur (Fe/S) protein assembly (CIA) machinery. Required for maturation of extramitochondrial Fe-S proteins. The Nubp1-Nubp2 heterotetramer forms a Fe-S scaffold complex, mediating the de novo assembly of an Fe-S cluster and its transfer to target apoproteins. This is Cytosolic Fe-S cluster assembly factor Nubp1 homolog from Drosophila ananassae (Fruit fly).